Reading from the N-terminus, the 568-residue chain is Sulfate adenylyltransferase (568 aa).

Residues 1–162 (MANSPHGGVL…IEAVNKLNHY (162 aa)) form an N-terminal region. The interval 163–388 (DYVALRYSPA…LRESSPPRAT (226 aa)) is catalytic. Gln-190 contributes to the sulfate binding site. ATP-binding positions include 190–193 (QTRN) and 284–287 (GRDH). Catalysis depends on residues Thr-191, Arg-192, and Asn-193. Arg-192 is a binding site for sulfate. Position 288 (Ala-288) interacts with sulfate. Val-326 lines the ATP pocket. The tract at residues 389–568 (QGFTIFLTGY…LESEGYFDRL (180 aa)) is allosteric regulation domain; adenylyl-sulfate kinase-like. Residues 428 to 431 (DTVR), Arg-445, 471 to 472 (IA), and Arg-510 each bind 3'-phosphoadenylyl sulfate.

The protein in the N-terminal section; belongs to the sulfate adenylyltransferase family. This sequence in the C-terminal section; belongs to the APS kinase family. Homohexamer. Dimer of trimers.

The protein resides in the cytoplasm. It carries out the reaction sulfate + ATP + H(+) = adenosine 5'-phosphosulfate + diphosphate. It functions in the pathway sulfur metabolism; hydrogen sulfide biosynthesis; sulfite from sulfate: step 1/3. Its activity is regulated as follows. Allosterically inhibited by 3'-phosphoadenosine 5'-phosphosulfate (PAPS). Catalyzes the first intracellular reaction of sulfate assimilation, forming adenosine-5'-phosphosulfate (APS) from inorganic sulfate and ATP. Plays an important role in sulfate activation as a component of the biosynthesis pathway of sulfur-containing amino acids. This Aspergillus terreus protein is Sulfate adenylyltransferase.